Here is a 145-residue protein sequence, read N- to C-terminus: Hemoglobin subunit beta-3 (145 aa).

The Globin domain maps to 1 to 145; sequence MLTAEEKAAV…VANALAHRYH (145 aa). A Phosphothreonine modification is found at T11. K58 is modified (N6-acetyllysine). Residue H62 coordinates heme b. K81 bears the N6-acetyllysine mark. H91 lines the heme b pocket. C92 is subject to S-nitrosocysteine.

It belongs to the globin family. As to quaternary structure, heterotetramer of two alpha chains and two beta chains. In terms of tissue distribution, red blood cells.

Functionally, involved in oxygen transport from the lung to the various peripheral tissues. The polypeptide is Hemoglobin subunit beta-3 (HBB) (Odocoileus virginianus virginianus (Virginia white-tailed deer)).